A 345-amino-acid chain; its full sequence is uncharacterized protein (345 aa).

It belongs to the transketolase family. Requires thiamine diphosphate as cofactor.

This is an uncharacterized protein from Sinorhizobium fredii (strain NBRC 101917 / NGR234).